Reading from the N-terminus, the 199-residue chain is NAD(P)H dehydrogenase (quinone) (199 aa).

Residues 4-190 (ILVLYYSSWG…EGARFQGKRL (187 aa)) enclose the Flavodoxin-like domain. FMN is bound by residues 10-15 (SSWGHM) and 78-80 (TRY). An NAD(+)-binding site is contributed by Trp12. Trp98 contributes to the substrate binding site. FMN is bound by residues 113–119 (STATQHG) and His134. Residues 155 to 175 (VRGGAPYGMTTTSDTDGSRMP) are disordered.

This sequence belongs to the WrbA family. The cofactor is FMN.

The catalysed reaction is a quinone + NADH + H(+) = a quinol + NAD(+). It carries out the reaction a quinone + NADPH + H(+) = a quinol + NADP(+). This is NAD(P)H dehydrogenase (quinone) from Chelativorans sp. (strain BNC1).